The sequence spans 90 residues: uncharacterized protein (90 aa).

Residues 69–89 (LLYIFLGAMIVIIFLVIKNQL) form a helical membrane-spanning segment.

It belongs to the IIV-6 466R family.

Its subcellular location is the membrane. This is an uncharacterized protein from Invertebrate iridescent virus 6 (IIV-6).